Consider the following 901-residue polypeptide: Core protein VP3 (901 aa).

It belongs to the orbivirus VP3 family.

The protein resides in the virion. In terms of biological role, the VP3 protein is one of the five proteins (with VP1, VP4, VP6 and VP7) which form the inner capsid of the virus. In Antilocapra americana (Pronghorn), this protein is Core protein VP3 (Segment-3).